An 852-amino-acid polypeptide reads, in one-letter code: DNA mismatch repair protein MutS (852 aa).

602–609 (GPNMSGKS) serves as a coordination point for ATP.

Belongs to the DNA mismatch repair MutS family.

This protein is involved in the repair of mismatches in DNA. It is possible that it carries out the mismatch recognition step. This protein has a weak ATPase activity. The protein is DNA mismatch repair protein MutS of Streptococcus thermophilus (strain ATCC BAA-250 / LMG 18311).